A 269-amino-acid chain; its full sequence is Imidazole glycerol phosphate synthase subunit HisF (269 aa).

Residues D23 and D142 contribute to the active site.

The protein belongs to the HisA/HisF family. As to quaternary structure, heterodimer of HisH and HisF.

Its subcellular location is the cytoplasm. The catalysed reaction is 5-[(5-phospho-1-deoxy-D-ribulos-1-ylimino)methylamino]-1-(5-phospho-beta-D-ribosyl)imidazole-4-carboxamide + L-glutamine = D-erythro-1-(imidazol-4-yl)glycerol 3-phosphate + 5-amino-1-(5-phospho-beta-D-ribosyl)imidazole-4-carboxamide + L-glutamate + H(+). It participates in amino-acid biosynthesis; L-histidine biosynthesis; L-histidine from 5-phospho-alpha-D-ribose 1-diphosphate: step 5/9. Its function is as follows. IGPS catalyzes the conversion of PRFAR and glutamine to IGP, AICAR and glutamate. The HisF subunit catalyzes the cyclization activity that produces IGP and AICAR from PRFAR using the ammonia provided by the HisH subunit. In Bordetella parapertussis (strain 12822 / ATCC BAA-587 / NCTC 13253), this protein is Imidazole glycerol phosphate synthase subunit HisF.